Reading from the N-terminus, the 356-residue chain is 3-dehydroquinate synthase (356 aa).

Residues 106 to 110, 130 to 131, lysine 143, and lysine 152 each bind NAD(+); these read GVVGD and TT. Residues glutamate 185, histidine 248, and histidine 265 each coordinate Zn(2+).

This sequence belongs to the sugar phosphate cyclases superfamily. Dehydroquinate synthase family. It depends on Co(2+) as a cofactor. Zn(2+) is required as a cofactor. NAD(+) serves as cofactor.

It localises to the cytoplasm. The enzyme catalyses 7-phospho-2-dehydro-3-deoxy-D-arabino-heptonate = 3-dehydroquinate + phosphate. It functions in the pathway metabolic intermediate biosynthesis; chorismate biosynthesis; chorismate from D-erythrose 4-phosphate and phosphoenolpyruvate: step 2/7. Its function is as follows. Catalyzes the conversion of 3-deoxy-D-arabino-heptulosonate 7-phosphate (DAHP) to dehydroquinate (DHQ). In Thermoanaerobacter sp. (strain X514), this protein is 3-dehydroquinate synthase.